A 607-amino-acid polypeptide reads, in one-letter code: Autophagy-related protein 22-2 (607 aa).

The segment at 1–29 (MTVAPPSPNSPAAELQQRPPRYPGEDTTP) is disordered. A helical membrane pass occupies residues 41–61 (YGIAAEVFAVCGVGSFLPLTL). N-linked (GlcNAc...) asparagine glycosylation occurs at asparagine 89. 3 consecutive transmembrane segments (helical) span residues 119–139 (SFAM…LISF), 151–170 (TLLL…FVFI), and 188–208 (CLGS…ANDP). The segment at 235–263 (SFSASDAESGPHPAAEAGSGTSSGPASPE) is disordered. Low complexity predominate over residues 247 to 263 (PAAEAGSGTSSGPASPE). 4 consecutive transmembrane segments (helical) span residues 274-294 (GVGL…SLLF), 307-327 (TLPL…FTMV), 379-399 (VLVF…VSGT), and 415-435 (VGLL…LWPV). Asparagine 445 is a glycosylation site (N-linked (GlcNAc...) asparagine). Transmembrane regions (helical) follow at residues 450-470 (LCIA…IPVF), 485-507 (FPLA…SFFG), 519-541 (YALY…GMLI), and 550-570 (GFFF…IVNA). The disordered stretch occupies residues 586 to 607 (KGHETEMSEQTEEAEGLLARGI).

Belongs to the ATG22 family.

It localises to the vacuole membrane. Vacuolar effluxer which mediate the efflux of amino acids resulting from autophagic degradation. The release of autophagic amino acids allows the maintenance of protein synthesis and viability during nitrogen starvation. The polypeptide is Autophagy-related protein 22-2 (atg22-2) (Aspergillus oryzae (strain ATCC 42149 / RIB 40) (Yellow koji mold)).